The chain runs to 300 residues: D-alanine--D-alanine ligase (300 aa).

The ATP-grasp domain occupies 99–293; sequence KKILKYANIN…FAELLNSIVK (195 aa). 126–181 serves as a coordination point for ATP; that stretch reads IEKIGYPVFVKPNSGGSSVATNLVKNKEGIKEAVELALKYDKEVMIENYTKGEEIT. Mg(2+) contacts are provided by Asp248, Glu260, and Asn262.

It belongs to the D-alanine--D-alanine ligase family. It depends on Mg(2+) as a cofactor. Requires Mn(2+) as cofactor.

It is found in the cytoplasm. The catalysed reaction is 2 D-alanine + ATP = D-alanyl-D-alanine + ADP + phosphate + H(+). The protein operates within cell wall biogenesis; peptidoglycan biosynthesis. Cell wall formation. This chain is D-alanine--D-alanine ligase, found in Clostridium botulinum (strain Loch Maree / Type A3).